Consider the following 297-residue polypeptide: Protoheme IX farnesyltransferase (297 aa).

A run of 9 helical transmembrane segments spans residues 23-43, 49-69, 93-113, 117-137, 144-164, 171-191, 215-235, 238-258, and 275-295; these read VTQL…PGMP, VFGT…NCLI, IQVL…LYHL, LTMW…TVIL, NIVI…AAVA, AWVL…ALAL, RLHI…PYAI, SGAL…WYAW, and FSIL…WVGL.

The protein belongs to the UbiA prenyltransferase family. Protoheme IX farnesyltransferase subfamily.

The protein resides in the cell inner membrane. The catalysed reaction is heme b + (2E,6E)-farnesyl diphosphate + H2O = Fe(II)-heme o + diphosphate. The protein operates within porphyrin-containing compound metabolism; heme O biosynthesis; heme O from protoheme: step 1/1. Converts heme B (protoheme IX) to heme O by substitution of the vinyl group on carbon 2 of heme B porphyrin ring with a hydroxyethyl farnesyl side group. The chain is Protoheme IX farnesyltransferase from Bordetella bronchiseptica (strain ATCC BAA-588 / NCTC 13252 / RB50) (Alcaligenes bronchisepticus).